Here is a 307-residue protein sequence, read N- to C-terminus: Ribonuclease Z (307 aa).

7 residues coordinate Zn(2+): His63, His65, Asp67, His68, His143, Asp213, and His271. The active-site Proton acceptor is Asp67.

It belongs to the RNase Z family. As to quaternary structure, homodimer. The cofactor is Zn(2+).

The enzyme catalyses Endonucleolytic cleavage of RNA, removing extra 3' nucleotides from tRNA precursor, generating 3' termini of tRNAs. A 3'-hydroxy group is left at the tRNA terminus and a 5'-phosphoryl group is left at the trailer molecule.. Functionally, zinc phosphodiesterase, which displays some tRNA 3'-processing endonuclease activity. Probably involved in tRNA maturation, by removing a 3'-trailer from precursor tRNA. This chain is Ribonuclease Z, found in Lactococcus lactis subsp. cremoris (strain MG1363).